A 374-amino-acid chain; its full sequence is Potassium channel subfamily K member 9 (374 aa).

Residues 1-8 lie on the Cytoplasmic side of the membrane; that stretch reads MKRQNVRT. Residues 9 to 29 form a helical membrane-spanning segment; that stretch reads LSLIICTFTYLLVGAAVFDAL. Residues 30 to 88 are Extracellular-facing; that stretch reads ESDYEMREEEKLKAEEIRLKGKYNISSEDYRQLELVIMQSEPHRAGVQWKFAGSFYFAI. The N-linked (GlcNAc...) asparagine glycan is linked to Asn-53. The segment at residues 89–101 is an intramembrane region (pore-forming); the sequence is TVITTIGYGHAAP. Topologically, residues 102-107 are extracellular; it reads GTDAGK. A helical membrane pass occupies residues 108-128; the sequence is AFCMFYAVLGIPLTLVMFQSL. The Cytoplasmic segment spans residues 129 to 158; it reads GERMNTFVKYLLKRIKKCCGMHSTDVSMEN. Residues 159–179 traverse the membrane as a helical segment; the sequence is MVTVGFFSCMGTLCIGAAAFS. The Extracellular portion of the chain corresponds to 180-194; it reads HYEEWSFFQAYYYCF. The segment at residues 195–207 is an intramembrane region (pore-forming); the sequence is ITLTTIGFGDYVA. The Extracellular segment spans residues 208-218; that stretch reads LQKNRALQKKP. A helical membrane pass occupies residues 219-239; the sequence is LYVAFSFMYILVGLTVIGAFL. Residues 240–374 are Cytoplasmic-facing; the sequence is NLVVLRFLTM…HRLMKRRKSI (135 aa).

The protein belongs to the two pore domain potassium channel (TC 1.A.1.8) family. Homodimer. May form heterodimers with other family members.

It localises to the cell membrane. Functionally, pH-dependent, voltage-insensitive, background potassium channel protein. This is Potassium channel subfamily K member 9 (kcnk9) from Xenopus laevis (African clawed frog).